The following is an 874-amino-acid chain: Alanine--tRNA ligase (874 aa).

The Zn(2+) site is built by His-564, His-568, Cys-665, and His-669.

It belongs to the class-II aminoacyl-tRNA synthetase family. The cofactor is Zn(2+).

The protein localises to the cytoplasm. The enzyme catalyses tRNA(Ala) + L-alanine + ATP = L-alanyl-tRNA(Ala) + AMP + diphosphate. Functionally, catalyzes the attachment of alanine to tRNA(Ala) in a two-step reaction: alanine is first activated by ATP to form Ala-AMP and then transferred to the acceptor end of tRNA(Ala). Also edits incorrectly charged Ser-tRNA(Ala) and Gly-tRNA(Ala) via its editing domain. This chain is Alanine--tRNA ligase, found in Burkholderia lata (strain ATCC 17760 / DSM 23089 / LMG 22485 / NCIMB 9086 / R18194 / 383).